The following is a 127-amino-acid chain: Protein ApaG (127 aa).

Residues 3–127 (ESEKYRIEVE…FMLAMPRVLH (125 aa)) enclose the ApaG domain.

The polypeptide is Protein ApaG (Aromatoleum aromaticum (strain DSM 19018 / LMG 30748 / EbN1) (Azoarcus sp. (strain EbN1))).